The following is a 327-amino-acid chain: MVREKVKVSTRTLQWKCVESRRDSKRLYYGRFILSPLMKGQADTIGIAMRRALLGEIEGTCITRAKSENIPHDYSNIVGIQESVHEILMNLNEIVLRSNLYGTRNALICVQGPGYITAQDIILPPSVEIIDNTQHIATLMEPIDLCIGLKIERNRGYSLKMSNNFEDRSYPIDAVFMPVQNANHSIHSYGNGNEKQEILFLEIWTNGSLTPKEALHEASRNLINLFIPFLHVEEETFYLENNQHQVTLPLFPFHNRLVNLRKKKKELAFQYIFIDQLELPPRIYNCLKKSNIHTLLDLLNNSQEDLIKIEHFHIEDVKKILDILEKK.

Residues 1 to 233 (MVREKVKVST…NLFIPFLHVE (233 aa)) form an alpha N-terminal domain (alpha-NTD) region. Residues 267–327 (LAFQYIFIDQ…KKILDILEKK (61 aa)) are alpha C-terminal domain (alpha-CTD).

The protein belongs to the RNA polymerase alpha chain family. In terms of assembly, in plastids the minimal PEP RNA polymerase catalytic core is composed of four subunits: alpha, beta, beta', and beta''. When a (nuclear-encoded) sigma factor is associated with the core the holoenzyme is formed, which can initiate transcription.

It localises to the plastid. The protein localises to the chloroplast. It catalyses the reaction RNA(n) + a ribonucleoside 5'-triphosphate = RNA(n+1) + diphosphate. Its function is as follows. DNA-dependent RNA polymerase catalyzes the transcription of DNA into RNA using the four ribonucleoside triphosphates as substrates. The sequence is that of DNA-directed RNA polymerase subunit alpha from Lepidium virginicum (Virginia pepperweed).